The sequence spans 475 residues: Cytosolic non-specific dipeptidase (475 aa).

A2 bears the N-acetylalanine mark. Position 9 is an N6-acetyllysine (K9). S58 bears the Phosphoserine mark. H99 is a Mn(2+) binding site. D101 is a catalytic residue. Residue D132 participates in Mn(2+) binding. E166 serves as the catalytic Proton acceptor. Substrate is bound by residues 166-167, D195, and H228; that span reads EE. Residues E167 and D195 each coordinate Mn(2+). Residue S299 is modified to Phosphoserine. Positions 330, 343, 417, and 445 each coordinate substrate. H445 contributes to the Mn(2+) binding site.

This sequence belongs to the peptidase M20A family. As to quaternary structure, homodimer. Mn(2+) is required as a cofactor.

The protein resides in the cytoplasm. The catalysed reaction is Hydrolysis of dipeptides, preferentially hydrophobic dipeptides including prolyl amino acids.. It carries out the reaction L-threonyl-L-threonine + H2O = 2 L-threonine. It catalyses the reaction L-threonyl-L-serine + H2O = L-threonine + L-serine. The enzyme catalyses L-seryl-L-threonine + H2O = L-threonine + L-serine. The catalysed reaction is L-cysteinylglycine + H2O = L-cysteine + glycine. It carries out the reaction (S)-lactate + L-phenylalanine = N-[(S)-lactoyl]-L-phenylalanine + H2O. Its function is as follows. Catalyzes the peptide bond hydrolysis in dipeptides, displaying a non-redundant activity toward threonyl dipeptides. Mediates threonyl dipeptide catabolism in a tissue-specific way. Has high dipeptidase activity toward cysteinylglycine, an intermediate metabolite in glutathione metabolism. Metabolizes N-lactoyl-amino acids, both through hydrolysis to form lactic acid and amino acids, as well as through their formation by reverse proteolysis. Plays a role in the regulation of cell cycle arrest and apoptosis. The sequence is that of Cytosolic non-specific dipeptidase (CNDP2) from Pongo abelii (Sumatran orangutan).